A 217-amino-acid chain; its full sequence is MVSSVAPPPEKMMFQLSLRRRGISDRAVLQAMEAVPRDRFVDPVHRDGAWRDTALPIACGQTISQPFVVAYMTEQLRLEAGHRLLEIGTGSGYHAAVLSRLVRDVVSVERFKTLADRARARLKELNYANVEVLLGDGFAIPEGAGTFDRIIVTAAMTELSQPLLDLLDPGGILIAPIGPANGRQTLIRVERKDDDFIRKALVDVRFVPALTGIAREL.

Residue S64 is part of the active site.

It belongs to the methyltransferase superfamily. L-isoaspartyl/D-aspartyl protein methyltransferase family.

It localises to the cytoplasm. It catalyses the reaction [protein]-L-isoaspartate + S-adenosyl-L-methionine = [protein]-L-isoaspartate alpha-methyl ester + S-adenosyl-L-homocysteine. Its function is as follows. Catalyzes the methyl esterification of L-isoaspartyl residues in peptides and proteins that result from spontaneous decomposition of normal L-aspartyl and L-asparaginyl residues. It plays a role in the repair and/or degradation of damaged proteins. This Rhodopseudomonas palustris (strain BisB5) protein is Protein-L-isoaspartate O-methyltransferase.